A 172-amino-acid chain; its full sequence is Endoribonuclease YbeY (172 aa).

Residues 1–21 form a disordered region; the sequence is MTLHVGAEPAPREDDTEDALR. The segment covering 10-21 has biased composition (basic and acidic residues); that stretch reads APREDDTEDALR. Zn(2+)-binding residues include histidine 134, histidine 138, and histidine 144.

Belongs to the endoribonuclease YbeY family. Zn(2+) is required as a cofactor.

It localises to the cytoplasm. Functionally, single strand-specific metallo-endoribonuclease involved in late-stage 70S ribosome quality control and in maturation of the 3' terminus of the 16S rRNA. The sequence is that of Endoribonuclease YbeY from Burkholderia lata (strain ATCC 17760 / DSM 23089 / LMG 22485 / NCIMB 9086 / R18194 / 383).